Reading from the N-terminus, the 479-residue chain is Ribosomal RNA small subunit methyltransferase F (479 aa).

Residues 125–131 (AAAPGSK), E149, D176, and D194 each bind S-adenosyl-L-methionine. C247 (nucleophile) is an active-site residue.

Belongs to the class I-like SAM-binding methyltransferase superfamily. RsmB/NOP family.

It is found in the cytoplasm. It carries out the reaction cytidine(1407) in 16S rRNA + S-adenosyl-L-methionine = 5-methylcytidine(1407) in 16S rRNA + S-adenosyl-L-homocysteine + H(+). In terms of biological role, specifically methylates the cytosine at position 1407 (m5C1407) of 16S rRNA. The sequence is that of Ribosomal RNA small subunit methyltransferase F from Salmonella agona (strain SL483).